The primary structure comprises 493 residues: Transcript termination protein A18 (493 aa).

A Helicase ATP-binding domain is found at 100 to 256 (MIELKRPLYI…NSIINIAKLS (157 aa)). Position 113 to 120 (113 to 120 (LACGFGKT)) interacts with ATP. Residues 206 to 209 (DESH) carry the DESH box motif.

This sequence belongs to the helicase family. Poxviruses subfamily. Interacts with G2. Might be part of a transcription complex composed at least of G2, A18, and H5.

The protein localises to the virion. In terms of biological role, DNA helicase which seems to act as a postreplicative transcription termination factor. Involved in ATP-dependent release of nascent RNA. Forms a stable complex with single-stranded DNA, and to a lesser extent RNA. This is Transcript termination protein A18 from Cowpox virus (strain GRI-90 / Grishak) (CPV).